The chain runs to 1160 residues: Carbamoyl phosphate synthase arginine-specific large chain, mitochondrial (1160 aa).

The segment at 81 to 478 (AEHEKVKKVV…SLQKALRQVD (398 aa)) is carboxyphosphate synthetic domain. Positions 208, 248, 254, 255, 285, 287, 292, 318, 319, 320, 361, and 375 each coordinate ATP. One can recognise an ATP-grasp 1 domain in the interval 212-404 (AKALNEINIP…LAYTAAKIAL (193 aa)). Residues Q361, E375, and N377 each coordinate Mg(2+). Q361, E375, and N377 together coordinate Mn(2+). An oligomerization domain region spans residues 479–623 (PSFLGFMAMP…YTSYNASSHD (145 aa)). The interval 624-1012 (IDFNEHGTMV…AYWAALQSTQ (389 aa)) is carbamoyl phosphate synthetic domain. The 199-residue stretch at 748–946 (SQILDKIGVD…FIDVATRSII (199 aa)) folds into the ATP-grasp 2 domain. ATP is bound by residues R784, K823, I825, E830, G855, V856, H857, S858, Q898, and E917. Mg(2+) is bound by residues Q898, E917, and N919. Mn(2+) is bound by residues Q898, E917, and N919. Positions 1013-1144 (NFKIPLPGQG…PSVLSEKKEM (132 aa)) are allosteric domain. One can recognise an MGS-like domain in the interval 1014–1160 (FKIPLPGQGI…WSEWIGSHDL (147 aa)).

It belongs to the CarB family. As to quaternary structure, heterodimer composed of 2 chains; the small (or glutamine) chain promotes the hydrolysis of glutamine to ammonia, which is used by the large (or ammonia) chain to synthesize carbamoyl phosphate. Mg(2+) serves as cofactor. Requires Mn(2+) as cofactor.

It localises to the mitochondrion. It carries out the reaction hydrogencarbonate + L-glutamine + 2 ATP + H2O = carbamoyl phosphate + L-glutamate + 2 ADP + phosphate + 2 H(+). The catalysed reaction is hydrogencarbonate + NH4(+) + 2 ATP = carbamoyl phosphate + 2 ADP + phosphate + 2 H(+). Its pathway is amino-acid biosynthesis; L-arginine biosynthesis; carbamoyl phosphate from bicarbonate: step 1/1. In terms of biological role, large subunit of the arginine-specific carbamoyl phosphate synthase (CPSase). CPSase catalyzes the formation of carbamoyl phosphate from the ammonia moiety of glutamine, hydrogencarbonate, and phosphate donated by ATP, the first step of the arginine biosynthetic pathway. The large subunit (synthetase) binds the substrates ammonia (free or transferred from glutamine from the small subunit), hydrogencarbonate and ATP and carries out an ATP-coupled ligase reaction, activating hydrogencarbonate by forming carboxy phosphate which reacts with ammonia to form carbamoyl phosphate. This Schizosaccharomyces pombe (strain 972 / ATCC 24843) (Fission yeast) protein is Carbamoyl phosphate synthase arginine-specific large chain, mitochondrial (arg4).